Consider the following 150-residue polypeptide: Large ribosomal subunit protein bL9 (150 aa).

Belongs to the bacterial ribosomal protein bL9 family.

Binds to the 23S rRNA. The sequence is that of Large ribosomal subunit protein bL9 from Stenotrophomonas maltophilia (strain R551-3).